A 751-amino-acid polypeptide reads, in one-letter code: Catalase-peroxidase 2 (751 aa).

The first 27 residues, 1-27 (MFKKTVPLLSAVAIAISFSAGTGVANA), serve as a signal peptide directing secretion. The tryptophyl-tyrosyl-methioninium (Trp-Tyr) (with M-264) cross-link spans 115–238 (WHGAGTYRVQ…LAAVQMGLIY (124 aa)). The active-site Proton acceptor is His116. A cross-link (tryptophyl-tyrosyl-methioninium (Tyr-Met) (with W-115)) is located at residues 238–264 (YVNPEGPNGKPDPLLAAKDIRDTFGRM). His279 lines the heme b pocket.

It belongs to the peroxidase family. Peroxidase/catalase subfamily. As to quaternary structure, homodimer or homotetramer. Heme b is required as a cofactor. Post-translationally, formation of the three residue Trp-Tyr-Met cross-link is important for the catalase, but not the peroxidase activity of the enzyme.

It catalyses the reaction H2O2 + AH2 = A + 2 H2O. It carries out the reaction 2 H2O2 = O2 + 2 H2O. Bifunctional enzyme with both catalase and broad-spectrum peroxidase activity. The protein is Catalase-peroxidase 2 of Idiomarina loihiensis (strain ATCC BAA-735 / DSM 15497 / L2-TR).